The chain runs to 126 residues: UPF0738 protein BH2850 (126 aa).

It belongs to the UPF0738 family.

The chain is UPF0738 protein BH2850 from Halalkalibacterium halodurans (strain ATCC BAA-125 / DSM 18197 / FERM 7344 / JCM 9153 / C-125) (Bacillus halodurans).